The primary structure comprises 512 residues: MVSSLIYSLCAVSGLLATTVNGLPKKGHRAETSLPIVKQTKCGSHTYQYNGLVGYGTVPSNAVDKYGDTLGGFGSSIAIEQASWKKNSDGTYEGIAWAIPDRGWNTQGTLNVQSRIQKLGLKLTLAPGATVSNPSNPNLEIKLLDTLLLTDPDGTPMTGLDADFSGNISYPGFPGMPVATYPGDGFGGSGAGGRRISLDSEGIVIGNDGAFWVSDEYGPYVYKFSREGRMLQAIQPPDAYIPRRNGKVSFSAASPPIYEPDRQTDPEDPETGRNNNQGFEGLTISRDGKTLYVLIQSALNNDGGPKKRYRKQARMLEYDISGTTPKYTHEYVVTLATFVDPHEQDPSKATITASQSEIHYLPTGDFLILSRDSNAGRAAQYTESVYRHADIISKSTQTTDIKSKSNDKADGSIASSEGVLDDGINPLDYCSFVDYNLNSELGKFRLHNGGAQDEHLLNEKWESLALVPVDPSKEFEDNGKNEYFLISFSDNDYITQDGTSSSLLLFFSSASE.

The signal sequence occupies residues 1–22; it reads MVSSLIYSLCAVSGLLATTVNG. N-linked (GlcNAc...) asparagine glycosylation is present at N167. The interval 251–282 is disordered; it reads SAASPPIYEPDRQTDPEDPETGRNNNQGFEGL.

The protein resides in the secreted. This is an uncharacterized protein from Arthroderma benhamiae (strain ATCC MYA-4681 / CBS 112371) (Trichophyton mentagrophytes).